Reading from the N-terminus, the 300-residue chain is GTPase Era (300 aa).

Positions 8–176 (RCGYVAIVGR…EAQIAKHLPE (169 aa)) constitute an Era-type G domain. Residues 16–23 (GRPNVGKS) form a G1 region. Residue 16 to 23 (GRPNVGKS) coordinates GTP. A G2 region spans residues 42–46 (QTTRH). Residues 63-66 (DTPG) are G3. GTP-binding positions include 63-67 (DTPGM) and 125-128 (NKTD). Residues 125-128 (NKTD) are G4. Residues 155 to 157 (ISA) form a G5 region. A KH type-2 domain is found at 199 to 283 (VREKIMRQLG…MLNLWVKVKG (85 aa)).

The protein belongs to the TRAFAC class TrmE-Era-EngA-EngB-Septin-like GTPase superfamily. Era GTPase family. As to quaternary structure, monomer.

It is found in the cytoplasm. Its subcellular location is the cell inner membrane. In terms of biological role, an essential GTPase that binds both GDP and GTP, with rapid nucleotide exchange. Plays a role in 16S rRNA processing and 30S ribosomal subunit biogenesis and possibly also in cell cycle regulation and energy metabolism. The polypeptide is GTPase Era (Pseudomonas putida (strain ATCC 700007 / DSM 6899 / JCM 31910 / BCRC 17059 / LMG 24140 / F1)).